A 953-amino-acid chain; its full sequence is Isoleucine--tRNA ligase (953 aa).

The 'HIGH' region motif lies at 61–71 (PYANGALHIGH). Glutamate 564 serves as a coordination point for L-isoleucyl-5'-AMP. The 'KMSKS' region motif lies at 605 to 609 (KMSKS). Lysine 608 provides a ligand contact to ATP. Residues cysteine 922, cysteine 925, cysteine 942, and cysteine 945 each coordinate Zn(2+).

Belongs to the class-I aminoacyl-tRNA synthetase family. IleS type 1 subfamily. In terms of assembly, monomer. Zn(2+) is required as a cofactor.

The protein localises to the cytoplasm. The catalysed reaction is tRNA(Ile) + L-isoleucine + ATP = L-isoleucyl-tRNA(Ile) + AMP + diphosphate. In terms of biological role, catalyzes the attachment of isoleucine to tRNA(Ile). As IleRS can inadvertently accommodate and process structurally similar amino acids such as valine, to avoid such errors it has two additional distinct tRNA(Ile)-dependent editing activities. One activity is designated as 'pretransfer' editing and involves the hydrolysis of activated Val-AMP. The other activity is designated 'posttransfer' editing and involves deacylation of mischarged Val-tRNA(Ile). In Thermosynechococcus vestitus (strain NIES-2133 / IAM M-273 / BP-1), this protein is Isoleucine--tRNA ligase.